The following is a 149-amino-acid chain: 3-hydroxyacyl-[acyl-carrier-protein] dehydratase FabZ (149 aa).

H53 is an active-site residue.

It belongs to the thioester dehydratase family. FabZ subfamily.

The protein resides in the cytoplasm. The enzyme catalyses a (3R)-hydroxyacyl-[ACP] = a (2E)-enoyl-[ACP] + H2O. Involved in unsaturated fatty acids biosynthesis. Catalyzes the dehydration of short chain beta-hydroxyacyl-ACPs and long chain saturated and unsaturated beta-hydroxyacyl-ACPs. This is 3-hydroxyacyl-[acyl-carrier-protein] dehydratase FabZ from Neisseria meningitidis serogroup B (strain ATCC BAA-335 / MC58).